The chain runs to 189 residues: Peptide deformylase (189 aa).

Cys-93 and His-135 together coordinate Fe cation. Residue Glu-136 is part of the active site. His-139 is a Fe cation binding site.

This sequence belongs to the polypeptide deformylase family. It depends on Fe(2+) as a cofactor.

It catalyses the reaction N-terminal N-formyl-L-methionyl-[peptide] + H2O = N-terminal L-methionyl-[peptide] + formate. Functionally, removes the formyl group from the N-terminal Met of newly synthesized proteins. Requires at least a dipeptide for an efficient rate of reaction. N-terminal L-methionine is a prerequisite for activity but the enzyme has broad specificity at other positions. In Karelsulcia muelleri (strain GWSS) (Sulcia muelleri), this protein is Peptide deformylase.